Reading from the N-terminus, the 76-residue chain is DNA-directed RNA polymerase subunit epsilon (76 aa).

The protein belongs to the RNA polymerase subunit epsilon family. In terms of assembly, RNAP is composed of a core of 2 alpha, a beta and a beta' subunit. The core is associated with a delta subunit, and at least one of epsilon or omega. When a sigma factor is associated with the core the holoenzyme is formed, which can initiate transcription.

It carries out the reaction RNA(n) + a ribonucleoside 5'-triphosphate = RNA(n+1) + diphosphate. Functionally, a non-essential component of RNA polymerase (RNAP). The protein is DNA-directed RNA polymerase subunit epsilon of Streptococcus agalactiae serotype Ia (strain ATCC 27591 / A909 / CDC SS700).